A 151-amino-acid polypeptide reads, in one-letter code: Transcriptional repressor NrdR (151 aa).

A zinc finger spans residues 3 to 34; that stretch reads CPFCSHPDTQVVETREAEDGGFIRRRRQCGGC. One can recognise an ATP-cone domain in the interval 49-139; it reads PAIVKKDGRR…VYRSFEDVDD (91 aa).

The protein belongs to the NrdR family. Zn(2+) is required as a cofactor.

Negatively regulates transcription of bacterial ribonucleotide reductase nrd genes and operons by binding to NrdR-boxes. The protein is Transcriptional repressor NrdR of Delftia acidovorans (strain DSM 14801 / SPH-1).